The chain runs to 328 residues: D-cysteine desulfhydrase (328 aa).

The residue at position 51 (Lys51) is an N6-(pyridoxal phosphate)lysine.

It belongs to the ACC deaminase/D-cysteine desulfhydrase family. Homodimer. Pyridoxal 5'-phosphate serves as cofactor.

The enzyme catalyses D-cysteine + H2O = hydrogen sulfide + pyruvate + NH4(+) + H(+). Functionally, catalyzes the alpha,beta-elimination reaction of D-cysteine and of several D-cysteine derivatives. It could be a defense mechanism against D-cysteine. The sequence is that of D-cysteine desulfhydrase from Escherichia fergusonii (strain ATCC 35469 / DSM 13698 / CCUG 18766 / IAM 14443 / JCM 21226 / LMG 7866 / NBRC 102419 / NCTC 12128 / CDC 0568-73).